Here is a 326-residue protein sequence, read N- to C-terminus: Iron-sulfur cluster assembly SufBD family protein PH0883 (326 aa).

The protein belongs to the iron-sulfur cluster assembly SufBD family.

This is Iron-sulfur cluster assembly SufBD family protein PH0883 from Pyrococcus horikoshii (strain ATCC 700860 / DSM 12428 / JCM 9974 / NBRC 100139 / OT-3).